The following is a 340-amino-acid chain: C5a anaphylatoxin chemotactic receptor 1 (340 aa).

Over 1-30 (TPDYGHYDDKDTLDANTPVDKTSNTLRVPD) the chain is Extracellular. Residues 3–11 (DYGHYDDKD) form a required for CHIPS binding region. Residues Tyr-4 and Tyr-7 each carry the sulfotyrosine modification. The interval 14–23 (DANTPVDKTS) is involved in C5a binding. The helical transmembrane segment at 31–57 (ILALVIFAVVFLVGVLRNALVVWVTAF) threads the bilayer. Over 58–62 (EAKRT) the chain is Cytoplasmic. The helical transmembrane segment at 63–86 (INAIWFLNLAVADFLSCLALPILF) threads the bilayer. The Extracellular segment spans residues 87–103 (TSIVQHHHWPFGGAACR). Cys-102 and Cys-181 are disulfide-bonded. A helical membrane pass occupies residues 104-125 (ILPSLILLNMYASILLLATISA). Topologically, residues 126 to 146 (DRFLLVFNPIWCQNFRGAGLA) are cytoplasmic. Residues 147 to 167 (WIACAVAWGLALLLTIPSFLY) form a helical membrane-spanning segment. The Extracellular portion of the chain corresponds to 168–193 (RVVREEYFPPKVLCGVDHGHDKRRER). A helical transmembrane segment spans residues 194-219 (AVAIARLVLGFVWPLLTLTMCYTFLL). Residues 220-235 (LRTWSRRATRSTKTLK) lie on the Cytoplasmic side of the membrane. Residues 236 to 258 (VVVAVVASFFIFWLPYQVTGMMM) traverse the membrane as a helical segment. At 259–275 (SFLEPSSPTFLLLKKLD) the chain is on the extracellular side. The helical transmembrane segment at 276–296 (SLCISFAYINCCINPIIYVVA) threads the bilayer. Residues 297-340 (GQGFQGRLRKSLPSLLRNVLTEESMVRESKSFTRSTVDTMAQKT) lie on the Cytoplasmic side of the membrane. Residues Ser-307, Ser-310, Ser-320, Ser-325, Ser-327, and Ser-331 each carry the phosphoserine modification.

The protein belongs to the G-protein coupled receptor 1 family. Homodimer. May also form higher-order oligomers. Interacts (when phosphorylated) with ARRB1 and ARRB2; the interaction is associated with internalization of C5aR. Interacts (via N-terminal domain) with S.aureus chemotaxis inhibitory protein (CHIPS); the interaction blocks the receptor and may thus inhibit the immune response. Sulfation plays a critical role in the association of C5aR with C5a, but no significant role in the ability of the receptor to transduce a signal and mobilize calcium in response to a small peptide agonist. Sulfation at Tyr-7 is important for CHIPS binding. In terms of processing, phosphorylated on serine residues in response to C5a binding, resulting in internalization of the receptor and short-term desensitization to C5a.

The protein localises to the cell membrane. Its subcellular location is the cytoplasmic vesicle. Functionally, receptor for the chemotactic and inflammatory peptide anaphylatoxin C5a. The ligand interacts with at least two sites on the receptor: a high-affinity site on the extracellular N-terminus, and a second site in the transmembrane region which activates downstream signaling events. Receptor activation stimulates chemotaxis, granule enzyme release, intracellular calcium release and superoxide anion production. The polypeptide is C5a anaphylatoxin chemotactic receptor 1 (C5AR1) (Macaca mulatta (Rhesus macaque)).